Reading from the N-terminus, the 389-residue chain is Succinate--CoA ligase [ADP-forming] subunit beta (389 aa).

The region spanning 9-244 is the ATP-grasp domain; the sequence is KQLFEHYGLP…LTQNDAREAE (236 aa). Residues Lys-46, 53-55, Glu-99, Cys-102, and Glu-107 contribute to the ATP site; that span reads GRG. The Mg(2+) site is built by Asn-199 and Asp-213. Substrate is bound by residues Asn-264 and 321–323; that span reads GIV.

This sequence belongs to the succinate/malate CoA ligase beta subunit family. Heterotetramer of two alpha and two beta subunits. It depends on Mg(2+) as a cofactor.

It carries out the reaction succinate + ATP + CoA = succinyl-CoA + ADP + phosphate. It catalyses the reaction GTP + succinate + CoA = succinyl-CoA + GDP + phosphate. Its pathway is carbohydrate metabolism; tricarboxylic acid cycle; succinate from succinyl-CoA (ligase route): step 1/1. Its function is as follows. Succinyl-CoA synthetase functions in the citric acid cycle (TCA), coupling the hydrolysis of succinyl-CoA to the synthesis of either ATP or GTP and thus represents the only step of substrate-level phosphorylation in the TCA. The beta subunit provides nucleotide specificity of the enzyme and binds the substrate succinate, while the binding sites for coenzyme A and phosphate are found in the alpha subunit. In Haemophilus influenzae (strain ATCC 51907 / DSM 11121 / KW20 / Rd), this protein is Succinate--CoA ligase [ADP-forming] subunit beta.